A 139-amino-acid chain; its full sequence is Maximins 4/H3 type 5 (139 aa).

The first 18 residues, 1 to 18 (MNFKYIFAVSFLIASAYA), serve as a signal peptide directing secretion. Residues 19–43 (RSVQNDEQSLSQRDVLEEESLREIR) constitute a propeptide that is removed on maturation. Asn70 is subject to Asparagine amide. Residues 74–118 (TAEEHEVMKRLEAVMRDLDSLDHPEEASERETRGFNQDEIAKEKR) constitute a propeptide that is removed on maturation. Isoleucine amide is present on Ile138.

Belongs to the bombinin family. As to expression, expressed by the skin glands.

It localises to the secreted. Functionally, maximin-4 shows antibacterial activity against both Gram-positive and Gram-negative bacteria. It also shows antimicrobial activity against the fungus C.albicans, but not against A.flavus nor P.uticale. It has little hemolytic activity. It does not possess a significant cytotoxicity against tumor cell lines. It does not possess a significant anti-HIV activity. Its function is as follows. Maximin-H3 shows antibacterial activity against both Gram-positive and Gram-negative bacteria. It also shows antimicrobial activity against the fungus C.albicans. Shows strong hemolytic activity. In Bombina maxima (Giant fire-bellied toad), this protein is Maximins 4/H3 type 5.